The sequence spans 172 residues: Shikimate kinase (172 aa).

11–16 (GAGKST) is a binding site for ATP. Ser15 serves as a coordination point for Mg(2+). Substrate-binding residues include Asp33, Arg57, and Gly79. Arg117 contributes to the ATP binding site. Arg136 serves as a coordination point for substrate. Arg153 provides a ligand contact to ATP.

The protein belongs to the shikimate kinase family. As to quaternary structure, monomer. Requires Mg(2+) as cofactor.

The protein localises to the cytoplasm. The enzyme catalyses shikimate + ATP = 3-phosphoshikimate + ADP + H(+). It participates in metabolic intermediate biosynthesis; chorismate biosynthesis; chorismate from D-erythrose 4-phosphate and phosphoenolpyruvate: step 5/7. Its function is as follows. Catalyzes the specific phosphorylation of the 3-hydroxyl group of shikimic acid using ATP as a cosubstrate. This is Shikimate kinase from Pseudomonas savastanoi pv. phaseolicola (strain 1448A / Race 6) (Pseudomonas syringae pv. phaseolicola (strain 1448A / Race 6)).